The sequence spans 788 residues: Protein translocase subunit SecA 2 (788 aa).

ATP-binding positions include Gln86, 104 to 108 (GEGKT), and Asp493.

Belongs to the SecA family. Monomer and homodimer. Part of the essential Sec protein translocation apparatus which comprises SecA, SecYEG and auxiliary proteins SecDF. Other proteins may also be involved.

The protein resides in the cell membrane. Its subcellular location is the cytoplasm. The catalysed reaction is ATP + H2O + cellular proteinSide 1 = ADP + phosphate + cellular proteinSide 2.. Part of the Sec protein translocase complex. Interacts with the SecYEG preprotein conducting channel. Has a central role in coupling the hydrolysis of ATP to the transfer of proteins into and across the cell membrane, serving as an ATP-driven molecular motor driving the stepwise translocation of polypeptide chains across the membrane. This chain is Protein translocase subunit SecA 2, found in Bacillus cereus (strain ZK / E33L).